The primary structure comprises 509 residues: Aspartic proteinase oryzasin-1 (509 aa).

The first 24 residues, 1-24 (MGTRSVALVLLAAVLLQALLPASA), serve as a signal peptide directing secretion. Positions 25 to 67 (AEGLVRIALKKRPIDENSRVAARLSGEEGARRLGLRGANSLGG) are cleaved as a propeptide — activation peptide. Residues 85–506 (YFGEIGVGTP…DYGKMRVGFA (422 aa)) enclose the Peptidase A1 domain. Residue aspartate 103 is part of the active site. An intrachain disulfide couples cysteine 116 to cysteine 122. A glycan (N-linked (GlcNAc...) asparagine) is linked at asparagine 252. Residues cysteine 281 and cysteine 285 are joined by a disulfide bond. Aspartate 290 is a catalytic residue. The region spanning 315–420 (VVSQECKTVV…NQLCDKLPSP (106 aa)) is the Saposin B-type domain. 4 disulfide bridges follow: cysteine 320–cysteine 414, cysteine 345–cysteine 386, cysteine 351–cysteine 383, and cysteine 428–cysteine 465. A glycan (N-linked (GlcNAc...) asparagine) is linked at asparagine 400.

The protein belongs to the peptidase A1 family.

The protein resides in the vacuole. Functionally, involved in the breakdown of propeptides of storage proteins in protein-storage vacuoles. The protein is Aspartic proteinase oryzasin-1 of Oryza sativa subsp. japonica (Rice).